Here is a 92-residue protein sequence, read N- to C-terminus: MARTVNCVYLNKEAEGLGFQLYPGDLGKRIFDNVSKEAWALWQSKQTMLINEKKLNMMNVEDRKFLEEQMVNFLFEGKDVEIEGYVPQKDDE.

The protein belongs to the Fe(2+)-trafficking protein family.

Functionally, could be a mediator in iron transactions between iron acquisition and iron-requiring processes, such as synthesis and/or repair of Fe-S clusters in biosynthetic enzymes. The chain is Probable Fe(2+)-trafficking protein from Shewanella pealeana (strain ATCC 700345 / ANG-SQ1).